Reading from the N-terminus, the 332-residue chain is Ketol-acid reductoisomerase (NADP(+)) (332 aa).

A KARI N-terminal Rossmann domain is found at methionine 1–threonine 182. NADP(+)-binding positions include tyrosine 25–glutamine 28, lysine 49, serine 51, and aspartate 83–glutamine 86. Residue histidine 108 is part of the active site. Glycine 134 is an NADP(+) binding site. The region spanning threonine 183 to leucine 328 is the KARI C-terminal knotted domain. Aspartate 191, glutamate 195, glutamate 227, and glutamate 231 together coordinate Mg(2+). Residue serine 252 participates in substrate binding.

This sequence belongs to the ketol-acid reductoisomerase family. Requires Mg(2+) as cofactor.

The enzyme catalyses (2R)-2,3-dihydroxy-3-methylbutanoate + NADP(+) = (2S)-2-acetolactate + NADPH + H(+). It carries out the reaction (2R,3R)-2,3-dihydroxy-3-methylpentanoate + NADP(+) = (S)-2-ethyl-2-hydroxy-3-oxobutanoate + NADPH + H(+). Its pathway is amino-acid biosynthesis; L-isoleucine biosynthesis; L-isoleucine from 2-oxobutanoate: step 2/4. It participates in amino-acid biosynthesis; L-valine biosynthesis; L-valine from pyruvate: step 2/4. Its function is as follows. Involved in the biosynthesis of branched-chain amino acids (BCAA). Catalyzes an alkyl-migration followed by a ketol-acid reduction of (S)-2-acetolactate (S2AL) to yield (R)-2,3-dihydroxy-isovalerate. In the isomerase reaction, S2AL is rearranged via a Mg-dependent methyl migration to produce 3-hydroxy-3-methyl-2-ketobutyrate (HMKB). In the reductase reaction, this 2-ketoacid undergoes a metal-dependent reduction by NADPH to yield (R)-2,3-dihydroxy-isovalerate. The chain is Ketol-acid reductoisomerase (NADP(+)) from Methanothrix thermoacetophila (strain DSM 6194 / JCM 14653 / NBRC 101360 / PT) (Methanosaeta thermophila).